The following is a 171-amino-acid chain: 3-hydroxydecanoyl-[acyl-carrier-protein] dehydratase (171 aa).

His70 is an active-site residue.

Belongs to the thioester dehydratase family. FabA subfamily. Homodimer.

Its subcellular location is the cytoplasm. The catalysed reaction is a (3R)-hydroxyacyl-[ACP] = a (2E)-enoyl-[ACP] + H2O. It catalyses the reaction (3R)-hydroxydecanoyl-[ACP] = (2E)-decenoyl-[ACP] + H2O. It carries out the reaction (2E)-decenoyl-[ACP] = (3Z)-decenoyl-[ACP]. The protein operates within lipid metabolism; fatty acid biosynthesis. In terms of biological role, necessary for the introduction of cis unsaturation into fatty acids. Catalyzes the dehydration of (3R)-3-hydroxydecanoyl-ACP to E-(2)-decenoyl-ACP and then its isomerization to Z-(3)-decenoyl-ACP. Can catalyze the dehydratase reaction for beta-hydroxyacyl-ACPs with saturated chain lengths up to 16:0, being most active on intermediate chain length. The protein is 3-hydroxydecanoyl-[acyl-carrier-protein] dehydratase of Pseudomonas syringae pv. tomato (strain ATCC BAA-871 / DC3000).